We begin with the raw amino-acid sequence, 173 residues long: ATP-dependent protease subunit HslV (173 aa).

Residue Thr2 is part of the active site. The Na(+) site is built by Gly158, Asp161, and Ser164.

It belongs to the peptidase T1B family. HslV subfamily. In terms of assembly, a double ring-shaped homohexamer of HslV is capped on each side by a ring-shaped HslU homohexamer. The assembly of the HslU/HslV complex is dependent on binding of ATP.

It is found in the cytoplasm. The enzyme catalyses ATP-dependent cleavage of peptide bonds with broad specificity.. Its activity is regulated as follows. Allosterically activated by HslU binding. In terms of biological role, protease subunit of a proteasome-like degradation complex believed to be a general protein degrading machinery. This is ATP-dependent protease subunit HslV from Haemophilus ducreyi (strain 35000HP / ATCC 700724).